Here is a 167-residue protein sequence, read N- to C-terminus: Epithelial membrane protein 2 (167 aa).

Residues 1 to 21 form a helical membrane-spanning segment; that stretch reads MLVLLAFIIVFHITSAALLLV. N-linked (GlcNAc...) asparagine glycans are attached at residues asparagine 44, asparagine 47, and asparagine 52. 3 helical membrane-spanning segments follow: residues 67-87, 95-115, and 143-163; these read TMILSTILCCIAFLIFLLQLF, FVLTSIIQLMACLCVMIAASI, and FILAWVAFAFTFISGLMYLIL.

It belongs to the PMP-22/EMP/MP20 family. In terms of assembly, interacts with PTK2; regulates PTK2 activation and localization. Interacts with ITGB3; regulates the levels of the heterodimer ITGA5-ITGB3 integrin surface expression. Interacts with P2RX7 (via C-terminus). Interacts with ITGB1; the interaction may be direct or indirect and ITGB1 has a heterodimer form.

The protein localises to the golgi apparatus membrane. The protein resides in the cell membrane. Its subcellular location is the apical cell membrane. It localises to the membrane raft. It is found in the cytoplasm. The protein localises to the nucleus. The protein resides in the perinuclear region. Functionally, functions as a key regulator of cell membrane composition by regulating protein surface expression. Also, plays a role in regulation of processes including cell migration, cell proliferation, cell contraction and cell adhesion. Regulates transepithelial migration of neutrophils into the alveolar lumen, potentially via mediation of cell surface expression of adhesion markers and lipid raft formation. Negatively regulates caveolae formation by reducing CAV1 expression and CAV1 amount by increasing lysosomal degradation. Facilitates surface trafficking and the formation of lipid rafts bearing GPI-anchor proteins. Regulates surface expression of MHC1 and ICAM1 proteins increasing susceptibility to T-cell mediated cytotoxicity. Regulates the plasma membrane expression of the integrin heterodimers ITGA6-ITGB1, ITGA5-ITGB3 and ITGA5-ITGB1 resulting in modulation of cell-matrix adhesion. Also regulates many processes through PTK2. Regulates blood vessel endothelial cell migration and angiogenesis by regulating VEGF protein expression through PTK2 activation. Regulates cell migration and cell contraction through PTK2 and SRC activation. Regulates focal adhesion density, F-actin conformation and cell adhesion capacity through interaction with PTK2. Positively regulates cell proliferation. Plays a role during cell death and cell blebbing. Promotes angiogenesis and vasculogenesis through induction of VEGFA via a HIF1A-dependent pathway. Also plays a role in embryo implantation by regulating surface trafficking of integrin heterodimer ITGA5-ITGB3. Plays a role in placental angiogenesis and uterine natural killer cell regulation at the maternal-fetal placental interface, however not required in the maternal tissues for a viable pregnancy. Involved in the early stages of embryogenic development and cardiogenesis, potentially via regulation of epithelial-mesenchymal transition timing. May play a role in glomerular filtration. This Bos taurus (Bovine) protein is Epithelial membrane protein 2 (EMP2).